Here is a 160-residue protein sequence, read N- to C-terminus: RNA pyrophosphohydrolase (160 aa).

A Nudix hydrolase domain is found at 10-154 (PYRPCVGVML…KRDVYVAVLD (145 aa)). The Nudix box motif lies at 44-65 (GGVEKGEDPRAAALRELWEETG).

The protein belongs to the Nudix hydrolase family. RppH subfamily. The cofactor is a divalent metal cation.

Functionally, accelerates the degradation of transcripts by removing pyrophosphate from the 5'-end of triphosphorylated RNA, leading to a more labile monophosphorylated state that can stimulate subsequent ribonuclease cleavage. This chain is RNA pyrophosphohydrolase, found in Roseobacter denitrificans (strain ATCC 33942 / OCh 114) (Erythrobacter sp. (strain OCh 114)).